Consider the following 198-residue polypeptide: Recombination protein RecR (198 aa).

A C4-type zinc finger spans residues 57–72; the sequence is CSICGRLTDDDPCSIC. One can recognise a Toprim domain in the interval 80–175; sequence TTILVLEDSR…KVTRLARGLA (96 aa).

Belongs to the RecR family.

Functionally, may play a role in DNA repair. It seems to be involved in an RecBC-independent recombinational process of DNA repair. It may act with RecF and RecO. The protein is Recombination protein RecR of Streptococcus pneumoniae (strain 70585).